The sequence spans 1421 residues: Envelopment polyprotein (1421 aa).

Residues 1–20 (MEGSYWWLSLLALLAWGANG) form the signal peptide. Over 21-479 (ESTSPAETSP…CRMSHRPRTC (459 aa)) the chain is Lumenal. The segment covering 22–31 (STSPAETSPA) has biased composition (low complexity). Residues 22-42 (STSPAETSPAPTTPNPPVVNP) form a disordered region. N-linked (GlcNAc...) asparagine; by host glycosylation is found at Asn-97 and Asn-346. The chain crosses the membrane as a helical span at residues 480–500 (LALFIWLGAGYGITCIAGYMV). Topologically, residues 501 to 610 (YYAILALSML…KLGTLLKRLS (110 aa)) are cytoplasmic. Residues 611-631 (WVTVFLCLFLTAIAPVQGQVT) form a helical membrane-spanning segment. Residues 632–643 (TSPVLPSNQSTE) are Lumenal-facing. N-linked (GlcNAc...) asparagine; by host glycosylation is present at Asn-639. A helical transmembrane segment spans residues 644-664 (CTLLPPPVFLIFSAVLMSKTL). Over 665-708 (KRMGPVNKVGAAGHSARRTNSPKNLYKSKQIANTKSGPREPRRR) the chain is Cytoplasmic. A helical membrane pass occupies residues 709-729 (VVVKALLILTASSALQSIHLA). Positions 722 to 776 (ALQSIHLAQAFDSGSLPEGAWEEEMQLVQGCNQECSLEEDECSCPDGQSMTRKLL) are excised as a propeptide. At 730-1330 (QAFDSGSLPE…GSFFRNYLGS (601 aa)) the chain is on the lumenal side. 2 cysteine pairs are disulfide-bonded: Cys-901–Cys-1096 and Cys-929–Cys-934. Asn-1081 and Asn-1299 each carry an N-linked (GlcNAc...) asparagine; by host glycan. The chain crosses the membrane as a helical span at residues 1331–1351 (ITLGIVLTLLPVAVVLLFFCY). Over 1352-1421 (GDKLFKLCSC…GKGKNYKELV (70 aa)) the chain is Cytoplasmic.

The protein belongs to the nairovirus envelope glycoprotein family. As to quaternary structure, heterodimer with glycoprotein C; in prefusion state. In terms of assembly, heterodimer with glycoprotein N; in prefusion state. Homotrimeric; in postfusion state. Post-translationally, specific enzymatic cleavage by host MBTPS1/S1P/SKI-1 endopeptidase yield glycoprotein N. Specific enzymatic cleavages by host furin-like protease and MBTPS1/S1P endopeptidase yield GP38. Glycosylated.

Its subcellular location is the host endoplasmic reticulum membrane. It localises to the virion membrane. The protein resides in the host Golgi apparatus membrane. Glycoprotein N and glycoprotein C interact with each other and are present at the surface of the virion. Glycoprotein N probably locks the Gn-Gc complex in a prefusion state. Glycoprotein N and glycoprotein C are able to attach the virion to host cell receptors. This attachment induces virion internalization predominantly through clathrin-dependent endocytosis. Functionally, glycoprotein C and glycoprotein N interact with each other and are present at the surface of the virion. The spikes at the surface of the virion are formed by an N-terminal extension of glycoprotein C. Glycoprotein N and glycoprotein C are able to attach the virion to host cell receptors. This attachment induces virion internalization predominantly through clathrin-dependent endocytosis. Class II fusion protein that promotes fusion of viral membrane with host endosomal membrane after endocytosis of the virion. Exposure to potassium is necessary for the conformational change leading to fusion. The polypeptide is Envelopment polyprotein (GP) (Ixodes).